A 307-amino-acid chain; its full sequence is Protoheme IX farnesyltransferase (307 aa).

Helical transmembrane passes span 31–51, 53–73, 103–123, 125–145, 153–173, 179–199, 223–243, 246–266, and 285–305; these read VTQL…PGMV, WPVL…AFAI, TLVF…VYAN, LTMW…TILL, IVIG…AVAG, AWFL…ALAL, LLHI…PFVY, SGYI…AYAW, and ILYL…KFVP.

It belongs to the UbiA prenyltransferase family. Protoheme IX farnesyltransferase subfamily.

Its subcellular location is the cell inner membrane. The enzyme catalyses heme b + (2E,6E)-farnesyl diphosphate + H2O = Fe(II)-heme o + diphosphate. The protein operates within porphyrin-containing compound metabolism; heme O biosynthesis; heme O from protoheme: step 1/1. Functionally, converts heme B (protoheme IX) to heme O by substitution of the vinyl group on carbon 2 of heme B porphyrin ring with a hydroxyethyl farnesyl side group. The sequence is that of Protoheme IX farnesyltransferase from Cupriavidus taiwanensis (strain DSM 17343 / BCRC 17206 / CCUG 44338 / CIP 107171 / LMG 19424 / R1) (Ralstonia taiwanensis (strain LMG 19424)).